A 121-amino-acid chain; its full sequence is MNALQEDTPPGPSTVFRPPTSSRPLETPHCREIRIGIAGITITLSLCGCANARAPTLRSATADNSESTGFKNVPDLRTDQPKPPSKKRSCDPSEYRVSELKESLITTTPSRPRTARRCIRL.

Disordered stretches follow at residues Met-1–Pro-28 and Leu-57–Leu-121. A compositionally biased stretch (polar residues) spans Arg-58–Phe-70. Positions Arg-88–Glu-102 are enriched in basic and acidic residues.

Belongs to the gyrovirus apoptin family.

It is found in the host nucleus. May act as transcriptional regulator. Induces apoptosis in infected cells. Element of infectious replication cycle. The protein is Apoptin (VP3) of Gallus gallus (Chicken).